The chain runs to 242 residues: Ubiquinone biosynthesis O-methyltransferase (242 aa).

Residues Arg44, Gly64, Asp85, and Met129 each contribute to the S-adenosyl-L-methionine site.

The protein belongs to the methyltransferase superfamily. UbiG/COQ3 family.

The catalysed reaction is a 3-demethylubiquinol + S-adenosyl-L-methionine = a ubiquinol + S-adenosyl-L-homocysteine + H(+). It carries out the reaction a 3-(all-trans-polyprenyl)benzene-1,2-diol + S-adenosyl-L-methionine = a 2-methoxy-6-(all-trans-polyprenyl)phenol + S-adenosyl-L-homocysteine + H(+). The protein operates within cofactor biosynthesis; ubiquinone biosynthesis. In terms of biological role, O-methyltransferase that catalyzes the 2 O-methylation steps in the ubiquinone biosynthetic pathway. This chain is Ubiquinone biosynthesis O-methyltransferase, found in Klebsiella pneumoniae (strain 342).